The following is a 471-amino-acid chain: Ribulose bisphosphate carboxylase large chain (471 aa).

2 residues coordinate substrate: asparagine 115 and threonine 165. The active-site Proton acceptor is the lysine 167. Position 169 (lysine 169) interacts with substrate. Positions 193, 195, and 196 each coordinate Mg(2+). At lysine 193 the chain carries N6-carboxylysine. The Proton acceptor role is filled by histidine 286. The substrate site is built by arginine 287, histidine 319, and serine 371.

The protein belongs to the RuBisCO large chain family. Type I subfamily. In terms of assembly, heterohexadecamer of 8 large chains and 8 small chains. Forms a CsoS2-CsoS1-RuBisCO complex. The cofactor is Mg(2+).

It is found in the carboxysome. The catalysed reaction is 2 (2R)-3-phosphoglycerate + 2 H(+) = D-ribulose 1,5-bisphosphate + CO2 + H2O. It catalyses the reaction D-ribulose 1,5-bisphosphate + O2 = 2-phosphoglycolate + (2R)-3-phosphoglycerate + 2 H(+). Its function is as follows. RuBisCO catalyzes two reactions: the carboxylation of D-ribulose 1,5-bisphosphate, the primary event in carbon dioxide fixation, as well as the oxidative fragmentation of the pentose substrate in the photorespiration process. Both reactions occur simultaneously and in competition at the same active site. The polypeptide is Ribulose bisphosphate carboxylase large chain (Parasynechococcus marenigrum (strain WH8102)).